Consider the following 221-residue polypeptide: Thiopurine S-methyltransferase (221 aa).

The S-adenosyl-L-methionine site is built by Trp12, Leu47, Glu68, and Arg125.

This sequence belongs to the class I-like SAM-binding methyltransferase superfamily. TPMT family.

Its subcellular location is the cytoplasm. It catalyses the reaction S-adenosyl-L-methionine + a thiopurine = S-adenosyl-L-homocysteine + a thiopurine S-methylether.. The protein is Thiopurine S-methyltransferase of Legionella pneumophila (strain Paris).